A 318-amino-acid chain; its full sequence is Methionyl-tRNA formyltransferase (318 aa).

Residue 112 to 115 (SILP) participates in (6S)-5,6,7,8-tetrahydrofolate binding.

The protein belongs to the Fmt family.

It catalyses the reaction L-methionyl-tRNA(fMet) + (6R)-10-formyltetrahydrofolate = N-formyl-L-methionyl-tRNA(fMet) + (6S)-5,6,7,8-tetrahydrofolate + H(+). Functionally, attaches a formyl group to the free amino group of methionyl-tRNA(fMet). The formyl group appears to play a dual role in the initiator identity of N-formylmethionyl-tRNA by promoting its recognition by IF2 and preventing the misappropriation of this tRNA by the elongation apparatus. This is Methionyl-tRNA formyltransferase from Shewanella sp. (strain ANA-3).